The chain runs to 116 residues: Small ribosomal subunit protein bS18c (116 aa).

The span at 1-13 (MKPSFRNTSPSFR) shows a compositional bias: polar residues. The segment at 1 to 51 (MKPSFRNTSPSFRNRSKPYFRNRSKPYFRNRSKPSFRNTSKRFSPNQQSFR) is disordered. Basic residues predominate over residues 14 to 34 (NRSKPYFRNRSKPYFRNRSKP). The segment covering 35–49 (SFRNTSKRFSPNQQS) has biased composition (polar residues).

This sequence belongs to the bacterial ribosomal protein bS18 family. In terms of assembly, part of the 30S ribosomal subunit.

It localises to the plastid. Its subcellular location is the chloroplast. The sequence is that of Small ribosomal subunit protein bS18c from Cryptomeria japonica (Japanese cedar).